Consider the following 360-residue polypeptide: Catabolic L-serine/threonine dehydratase (360 aa).

Position 2 is an N-acetylserine (serine 2). N6-(pyridoxal phosphate)lysine is present on lysine 37.

It belongs to the serine/threonine dehydratase family. The cofactor is pyridoxal 5'-phosphate.

The protein localises to the mitochondrion. It catalyses the reaction L-serine = pyruvate + NH4(+). The catalysed reaction is L-threonine = 2-oxobutanoate + NH4(+). The protein is Catabolic L-serine/threonine dehydratase (CHA1) of Saccharomyces cerevisiae (strain ATCC 204508 / S288c) (Baker's yeast).